The following is a 142-amino-acid chain: Large ribosomal subunit protein uL13 (142 aa).

Belongs to the universal ribosomal protein uL13 family. Part of the 50S ribosomal subunit.

This protein is one of the early assembly proteins of the 50S ribosomal subunit, although it is not seen to bind rRNA by itself. It is important during the early stages of 50S assembly. This chain is Large ribosomal subunit protein uL13, found in Mannheimia succiniciproducens (strain KCTC 0769BP / MBEL55E).